Here is a 104-residue protein sequence, read N- to C-terminus: Zinc finger C2H2 protein ECU02_0310 (104 aa).

The C2H2-type zinc-finger motif lies at 56 to 80 (FYCCECDRHFITEKVLMEHKRSNPH).

This sequence belongs to the ZNF593/BUD20 C2H2-type zinc-finger protein family. In terms of assembly, associates with pre-60S ribosomal particles; released from the pre-60S particle very early in the cytoplasm.

The protein resides in the nucleus. The protein localises to the cytoplasm. Functionally, involved in pre-60S ribosomal particles maturation by promoting the nuclear export of the 60S ribosome. This chain is Zinc finger C2H2 protein ECU02_0310, found in Encephalitozoon cuniculi (strain GB-M1) (Microsporidian parasite).